The sequence spans 98 residues: N(2)-fixation sustaining protein CowN (98 aa).

It belongs to the CowN family.

Its function is as follows. Is required to sustain N(2)-dependent growth in the presence of low levels of carbon monoxide (CO). Probably acts by protecting the N(2) fixation ability of the nitrogenase complex, which is inactivated in the presence of CO. This chain is N(2)-fixation sustaining protein CowN, found in Azospirillum sp. (strain B510).